Consider the following 543-residue polypeptide: Carboxypeptidase Y homolog A (543 aa).

An N-terminal signal peptide occupies residues 1–17 (MRVAASALLAGAASAAV). A propeptide spanning residues 18–128 (APQQQILKFP…KLEQFDLRVK (111 aa)) is cleaved from the precursor. 5 disulfides stabilise this stretch: cysteine 182/cysteine 421, cysteine 316/cysteine 330, cysteine 340/cysteine 363, cysteine 347/cysteine 356, and cysteine 385/cysteine 391. Asparagine 213 carries N-linked (GlcNAc...) asparagine glycosylation. Serine 269 is an active-site residue. Aspartate 460 is a catalytic residue. A glycan (N-linked (GlcNAc...) asparagine) is linked at asparagine 508. The active site involves histidine 519.

This sequence belongs to the peptidase S10 family.

It is found in the vacuole. It catalyses the reaction Release of a C-terminal amino acid with broad specificity.. Its function is as follows. Vacuolar carboxypeptidase involved in degradation of small peptides. Digests preferentially peptides containing an aliphatic or hydrophobic residue in P1' position, as well as methionine, leucine or phenylalanine in P1 position of ester substrate. The polypeptide is Carboxypeptidase Y homolog A (CPYA) (Phaeosphaeria nodorum (strain SN15 / ATCC MYA-4574 / FGSC 10173) (Glume blotch fungus)).